The following is a 313-amino-acid chain: Methionyl-tRNA formyltransferase (313 aa).

113-116 (SLLP) contributes to the (6S)-5,6,7,8-tetrahydrofolate binding site.

It belongs to the Fmt family.

The catalysed reaction is L-methionyl-tRNA(fMet) + (6R)-10-formyltetrahydrofolate = N-formyl-L-methionyl-tRNA(fMet) + (6S)-5,6,7,8-tetrahydrofolate + H(+). Functionally, attaches a formyl group to the free amino group of methionyl-tRNA(fMet). The formyl group appears to play a dual role in the initiator identity of N-formylmethionyl-tRNA by promoting its recognition by IF2 and preventing the misappropriation of this tRNA by the elongation apparatus. This Acidithiobacillus ferrooxidans (strain ATCC 23270 / DSM 14882 / CIP 104768 / NCIMB 8455) (Ferrobacillus ferrooxidans (strain ATCC 23270)) protein is Methionyl-tRNA formyltransferase.